The chain runs to 214 residues: Transcriptional regulatory protein ComA (214 aa).

Residues 3-121 (KILVIDDHPA…KITQYIYHVL (119 aa)) enclose the Response regulatory domain. The residue at position 55 (Asp-55) is a 4-aspartylphosphate. The HTH luxR-type domain maps to 147–212 (SQKEQDVLTP…EAVLIAKSDG (66 aa)). Residues 171-190 (NQEIADALHLSKRSIEYSLT) constitute a DNA-binding region (H-T-H motif).

Post-translationally, phosphorylated by ComP.

It is found in the cytoplasm. Its function is as follows. Response regulator in the two-component regulatory system ComP/ComA involved in a major quorum response pathway that regulates the development of genetic competence. Regulates directly the expression of over 20 genes, including genes of the srfA operon, degQ, rapA, rapC, rapE, rapF, etc. Regulates indirectly, through the regulation of comK transcription, the expression of late competence genes. The chain is Transcriptional regulatory protein ComA (comA) from Bacillus subtilis (strain 168).